We begin with the raw amino-acid sequence, 235 residues long: Large ribosomal subunit protein uL1 (235 aa).

It belongs to the universal ribosomal protein uL1 family. As to quaternary structure, part of the 50S ribosomal subunit.

In terms of biological role, binds directly to 23S rRNA. The L1 stalk is quite mobile in the ribosome, and is involved in E site tRNA release. Functionally, protein L1 is also a translational repressor protein, it controls the translation of the L11 operon by binding to its mRNA. This Desulfotalea psychrophila (strain LSv54 / DSM 12343) protein is Large ribosomal subunit protein uL1.